Consider the following 556-residue polypeptide: Putative protein SPATA31F2P (556 aa).

Disordered stretches follow at residues 133–154 (ALKALSGPHPQSGGQDNDSGSD) and 210–231 (LPKTSPQSAPPSSPLSPNWVSP). Residues 144 to 154 (SGGQDNDSGSD) are compositionally biased toward polar residues.

This sequence belongs to the SPATA31 family.

The sequence is that of Putative protein SPATA31F2P from Homo sapiens (Human).